The primary structure comprises 684 residues: Pentatricopeptide repeat-containing protein At4g14850 (684 aa).

PPR repeat units follow at residues 5–39, 41–71, 72–106, 107–141, 142–172, 173–207, 208–242, 243–277, 278–308, 309–343, 344–374, 375–409, 412–442, and 448–478; these read SADALGLLLKNAISASSMRLGRVVHARIVKTLDSP, PPFLANYLINMYSKLDHPESARLVLRLTPAR, NVVSWTSLISGLAQNGHFSTALVEFFEMRREGVVP, NDFTFPCAFKAVASLRLPVTGKQIHALAVKCGRIL, DVFVGCSAFDMYCKTRLRDDARKLFDEIPER, NLETWNAFISNSVTDGRPREAIEAFIEFRRIDGHP, NSITFCAFLNACSDWLHLNLGMQLHGLVLRSGFDT, DVSVCNGLIDFYGKCKQIRSSEIIFTEMGTKNAVS, WCSLVAAYVQNHEDEKASVLYLRSRKDIVET, SDFMISSVLSACAGMAGLELGRSIHAHAVKACVER, TIFVGSALVDMYGKCGCIEDSEQAFDEMPEK, NLVTRNSLIGGYAHQGQVDMALALFEEMAPRGCGP, NYMTFVSLLSACSRAGAVENGMKIFDSMRST, and GAEHYSCIVDMLGRAGMVERAYEFIKKMPIQ. Residues 483-558 are type E motif; degenerate; sequence VWGALQNACR…GAGYSWITVK (76 aa). Positions 559–589 are type E(+) motif; degenerate; it reads NQVHAFQAKDRSHILNKEIQTTLAKLRNEME. The tract at residues 590–684 is type DYW motif; sequence AAGYKPDLKL…DGICSCKDYW (95 aa).

This sequence belongs to the PPR family. PCMP-H subfamily.

In terms of biological role, acts as a regulatory factor of isoprenoid biosynthesis. Could bind RNA. This chain is Pentatricopeptide repeat-containing protein At4g14850 (LOI1), found in Arabidopsis thaliana (Mouse-ear cress).